Here is a 476-residue protein sequence, read N- to C-terminus: Inosine-5'-monophosphate dehydrogenase (476 aa).

2 consecutive CBS domains span residues 93-151 (IIRD…VKDI) and 152-211 (MTKD…TRDE). Residues D242 and 292 to 294 (GIG) each bind NAD(+). Positions 294 and 296 each coordinate K(+). Residue S297 coordinates IMP. Residue C299 coordinates K(+). The Thioimidate intermediate role is filled by C299. Residues 334-336 (DGG), 357-358 (GY), and 381-385 (YRGMG) contribute to the IMP site. R398 serves as the catalytic Proton acceptor. E408 is a binding site for IMP. E462 is a binding site for K(+).

This sequence belongs to the IMPDH/GMPR family. Homotetramer. It depends on K(+) as a cofactor.

The catalysed reaction is IMP + NAD(+) + H2O = XMP + NADH + H(+). It participates in purine metabolism; XMP biosynthesis via de novo pathway; XMP from IMP: step 1/1. With respect to regulation, mycophenolic acid (MPA) is a non-competitive inhibitor that prevents formation of the closed enzyme conformation by binding to the same site as the amobile flap. In contrast, mizoribine monophosphate (MZP) is a competitive inhibitor that induces the closed conformation. MPA is a potent inhibitor of mammalian IMPDHs but a poor inhibitor of the bacterial enzymes. MZP is a more potent inhibitor of bacterial IMPDH. Catalyzes the conversion of inosine 5'-phosphate (IMP) to xanthosine 5'-phosphate (XMP), the first committed and rate-limiting step in the de novo synthesis of guanine nucleotides, and therefore plays an important role in the regulation of cell growth. The polypeptide is Inosine-5'-monophosphate dehydrogenase (Korarchaeum cryptofilum (strain OPF8)).